A 447-amino-acid chain; its full sequence is 3-phosphoshikimate 1-carboxyvinyltransferase 2 (447 aa).

3-phosphoshikimate-binding residues include lysine 40, serine 41, and arginine 45. Lysine 40 is a phosphoenolpyruvate binding site. 2 residues coordinate phosphoenolpyruvate: glycine 109 and arginine 138. Residues serine 184, serine 185, glutamine 186, aspartate 329, and histidine 356 each contribute to the 3-phosphoshikimate site. A phosphoenolpyruvate-binding site is contributed by glutamine 186. Aspartate 329 functions as the Proton acceptor in the catalytic mechanism. 3 residues coordinate phosphoenolpyruvate: arginine 360, arginine 403, and lysine 428.

It belongs to the EPSP synthase family. As to quaternary structure, monomer.

Its subcellular location is the cytoplasm. The enzyme catalyses 3-phosphoshikimate + phosphoenolpyruvate = 5-O-(1-carboxyvinyl)-3-phosphoshikimate + phosphate. It participates in metabolic intermediate biosynthesis; chorismate biosynthesis; chorismate from D-erythrose 4-phosphate and phosphoenolpyruvate: step 6/7. Catalyzes the transfer of the enolpyruvyl moiety of phosphoenolpyruvate (PEP) to the 5-hydroxyl of shikimate-3-phosphate (S3P) to produce enolpyruvyl shikimate-3-phosphate and inorganic phosphate. This chain is 3-phosphoshikimate 1-carboxyvinyltransferase 2, found in Halalkalibacterium halodurans (strain ATCC BAA-125 / DSM 18197 / FERM 7344 / JCM 9153 / C-125) (Bacillus halodurans).